Here is a 301-residue protein sequence, read N- to C-terminus: Protoheme IX farnesyltransferase (301 aa).

Helical transmembrane passes span 34–54 (LVVF…HPLI), 55–75 (GLVS…FNMW), 102–121 (AWEC…AIAV), 125–144 (SALL…TMLL), 152–172 (IVIG…SVSG), 181–201 (LFAI…LLTL), 222–242 (SHIL…GLFV), 247–267 (LYEI…IAVF), and 280–300 (GLFK…IACV).

It belongs to the UbiA prenyltransferase family. Protoheme IX farnesyltransferase subfamily.

The protein localises to the cell inner membrane. The catalysed reaction is heme b + (2E,6E)-farnesyl diphosphate + H2O = Fe(II)-heme o + diphosphate. It participates in porphyrin-containing compound metabolism; heme O biosynthesis; heme O from protoheme: step 1/1. Functionally, converts heme B (protoheme IX) to heme O by substitution of the vinyl group on carbon 2 of heme B porphyrin ring with a hydroxyethyl farnesyl side group. The chain is Protoheme IX farnesyltransferase from Anaplasma marginale (strain Florida).